A 242-amino-acid polypeptide reads, in one-letter code: Aspartate/glutamate leucyltransferase (242 aa).

This sequence belongs to the R-transferase family. Bpt subfamily.

The protein localises to the cytoplasm. It catalyses the reaction N-terminal L-glutamyl-[protein] + L-leucyl-tRNA(Leu) = N-terminal L-leucyl-L-glutamyl-[protein] + tRNA(Leu) + H(+). The enzyme catalyses N-terminal L-aspartyl-[protein] + L-leucyl-tRNA(Leu) = N-terminal L-leucyl-L-aspartyl-[protein] + tRNA(Leu) + H(+). Its function is as follows. Functions in the N-end rule pathway of protein degradation where it conjugates Leu from its aminoacyl-tRNA to the N-termini of proteins containing an N-terminal aspartate or glutamate. The protein is Aspartate/glutamate leucyltransferase of Alcanivorax borkumensis (strain ATCC 700651 / DSM 11573 / NCIMB 13689 / SK2).